A 309-amino-acid polypeptide reads, in one-letter code: 2-phospho-L-lactate transferase (309 aa).

The 7,8-didemethyl-8-hydroxy-5-deazariboflavin site is built by Asp-50 and Lys-89.

The protein belongs to the CofD family. In terms of assembly, homodimer. Requires Mg(2+) as cofactor.

The catalysed reaction is (2S)-lactyl-2-diphospho-5'-guanosine + 7,8-didemethyl-8-hydroxy-5-deazariboflavin = oxidized coenzyme F420-0 + GMP + H(+). It functions in the pathway cofactor biosynthesis; coenzyme F420 biosynthesis. Catalyzes the transfer of the 2-phospholactate moiety from (2S)-lactyl-2-diphospho-5'-guanosine to 7,8-didemethyl-8-hydroxy-5-deazariboflavin (FO) with the formation of oxidized coenzyme F420-0 and GMP. This Methanococcus maripaludis (strain C6 / ATCC BAA-1332) protein is 2-phospho-L-lactate transferase.